The chain runs to 358 residues: Chorismate synthase (358 aa).

Residue arginine 48 coordinates NADP(+). FMN-binding positions include 125–127, serine 277, 292–296, and arginine 318; these read RAS and KPIPS.

It belongs to the chorismate synthase family. In terms of assembly, homotetramer. Requires FMNH2 as cofactor.

It catalyses the reaction 5-O-(1-carboxyvinyl)-3-phosphoshikimate = chorismate + phosphate. Its pathway is metabolic intermediate biosynthesis; chorismate biosynthesis; chorismate from D-erythrose 4-phosphate and phosphoenolpyruvate: step 7/7. In terms of biological role, catalyzes the anti-1,4-elimination of the C-3 phosphate and the C-6 proR hydrogen from 5-enolpyruvylshikimate-3-phosphate (EPSP) to yield chorismate, which is the branch point compound that serves as the starting substrate for the three terminal pathways of aromatic amino acid biosynthesis. This reaction introduces a second double bond into the aromatic ring system. The protein is Chorismate synthase of Desulfatibacillum aliphaticivorans.